A 545-amino-acid polypeptide reads, in one-letter code: Ribulokinase (545 aa).

Belongs to the ribulokinase family.

It carries out the reaction D-ribulose + ATP = D-ribulose 5-phosphate + ADP + H(+). The enzyme catalyses L-ribulose + ATP = L-ribulose 5-phosphate + ADP + H(+). Its pathway is carbohydrate degradation; L-arabinose degradation via L-ribulose; D-xylulose 5-phosphate from L-arabinose (bacterial route): step 2/3. This Staphylococcus aureus (strain Mu3 / ATCC 700698) protein is Ribulokinase.